The chain runs to 40 residues: Beta/delta-ctenitoxin-Pr1a (40 aa).

Intrachain disulfides connect C1/C15, C8/C21, C14/C31, and C23/C29.

Belongs to the neurotoxin 03 (Tx2) family. 05 subfamily. In terms of tissue distribution, expressed by the venom gland.

It is found in the secreted. Functionally, potent insecticidal toxin that binds to two distinct sites in insect sodium channels, with close affinity (Kd1=34.7 pM and Kd2=35.1 pM). Its association is rather fast (1.4 and 8.5 minutes, respectively for sites 1 and 2) and its dissociation is a slower process (5.4 and 32.8 minutes, respectively). On rat brain synaptosomes the toxin partially competes (~30%) with the beta-toxin CssIV, but does not compete with the alpha-toxin AaII, nor with the beta-toxin Ts VII. On cockroach nerve cord synaptosomes, the toxin does not compete with the anti-insect toxin LqqIT1, but it competes with the 'alpha-like' toxin BomIV (IC(50)=80 pM). In cockroach neurons, the toxin inhibits the inactivation of sodium channels and it shifts the sodium channel activation to hyperpolarizing potentials. Hence, it behaves like an 'alpha-like' toxin and binds preferentially to site 3 on the insect Nav channel, located on the domain IV. The toxin may also inhibit the N-methyl-D-aspartate (NMDA)-subtype of ionotropic glutamate receptor (GRIN). In vivo, the toxin causes excitatory effects on insects. The polypeptide is Beta/delta-ctenitoxin-Pr1a (Phoneutria reidyi (Brazilian Amazonian armed spider)).